A 358-amino-acid polypeptide reads, in one-letter code: Acyl-CoA Delta-12 desaturase (358 aa).

The next 2 membrane-spanning stretches (helical) occupy residues 30 to 50 (IILY…AMFY) and 55 to 75 (TVFY…AGSH). Fe cation contacts are provided by His75, His80, His112, His115, and His116. The short motif at 75 to 80 (HRLWAH) is the Histidine box-1 element. The short motif at 112–116 (HRVHH) is the Histidine box-2 element. 2 helical membrane-spanning segments follow: residues 175–195 (TFFA…YFWG) and 200–220 (TAFF…TFLV). Residues His225, His254, His257, and His258 each contribute to the Fe cation site. The Histidine box-3 motif lies at 254-258 (HNYHH).

The protein belongs to the fatty acid desaturase type 1 family. Fe(2+) serves as cofactor.

The protein resides in the membrane. It catalyses the reaction (9Z)-octadecenoyl-CoA + 2 Fe(II)-[cytochrome b5] + O2 + 2 H(+) = (9Z,12Z)-octadecadienoyl-CoA + 2 Fe(III)-[cytochrome b5] + 2 H2O. It carries out the reaction (9Z)-hexadecenoyl-CoA + 2 Fe(II)-[cytochrome b5] + O2 + 2 H(+) = (9Z,12Z)-hexadecadienoyl-CoA + 2 Fe(III)-[cytochrome b5] + 2 H2O. In terms of biological role, catalyzes the formation of a Delta12 double bond, acting on monounsaturated fatty acyl substrates like palmitoleoyl-CoA ((9Z)-hexadecenoyl-CoA) and oleoyl-CoA ((9Z)-octadecenoyl-CoA) with higher desaturation activity on (9Z)-octadecenoyl-CoA than (9Z)-hexadecenoyl-CoA. Requires preexisting cis double bond at the Delta9 position of fatty acyls to be able to insert the Delta12 double bond. Delta12-desaturation of (9Z)-octadecenoyl-CoA in insects produces (9Z,12Z)-octadecadienoyl-CoA (linoleoyl-CoA) which may be used to supply precursors of crucial mediators of immunity and reproduction and other essential functions. This Tribolium castaneum (Red flour beetle) protein is Acyl-CoA Delta-12 desaturase.